The following is a 425-amino-acid chain: MKSWTSRPVPELPGSMPQLRLYDTALGRVVDVERQPEQSMYVCGITPYDATHMGHAASYVAFDLLNRAWRDAGVRVSYVQNVTDIDDPLLERATATGVDWRELAQSQIDLFQTDMDALNVLAPNHYIGAVEAIPDIVPAIEQLIADGVAYRVAGSEGEPDGDVYYDVETAGKRSDATDAWTLGDVSGLGEKEMLELFAERGGDPTRAGKRHALDPLLWRVARDGEPSWPGSTLGDGRPGWHIECTVIAQKYLPAPFTVQGGGSDLVFPHHEMGAGHAYSLSGVPLARHYSHAGMVGLDGEKMSKSKGNLVLVSKLRAAGEEPAAIRLAILAHHYRSDWSWTDAEFAEAKDRLKQWRAALDHAPAGSAAALISAMRDELANDLNAPGAIAAVDHWAAEAIRSGSDKSEQDTALVTDAIDALLGVEL.

Position 43 (cysteine 43) interacts with Zn(2+). L-cysteinyl-5'-AMP is bound by residues 43 to 46 (CGIT), serine 58, and 81 to 83 (NVT). The 'HIGH' region signature appears at 45 to 55 (ITPYDATHMGH). Positions 199–204 (ERGGDP) match the 'ERGGDP' region motif. Residue tryptophan 240 coordinates L-cysteinyl-5'-AMP. Cysteine 244 serves as a coordination point for Zn(2+). 262-264 (GSD) serves as a coordination point for L-cysteinyl-5'-AMP. Histidine 269 contributes to the Zn(2+) binding site. Residue valine 295 coordinates L-cysteinyl-5'-AMP. The short motif at 301-305 (KMSKS) is the 'KMSKS' region element.

The protein belongs to the class-I aminoacyl-tRNA synthetase family. MshC subfamily. Monomer. Zn(2+) is required as a cofactor.

It catalyses the reaction 1D-myo-inositol 2-amino-2-deoxy-alpha-D-glucopyranoside + L-cysteine + ATP = 1D-myo-inositol 2-(L-cysteinylamino)-2-deoxy-alpha-D-glucopyranoside + AMP + diphosphate + H(+). Its function is as follows. Catalyzes the ATP-dependent condensation of GlcN-Ins and L-cysteine to form L-Cys-GlcN-Ins. The protein is L-cysteine:1D-myo-inositol 2-amino-2-deoxy-alpha-D-glucopyranoside ligase of Paenarthrobacter aurescens (strain TC1).